A 381-amino-acid polypeptide reads, in one-letter code: Glycerol-3-phosphate dehydrogenase [NAD(+)] (381 aa).

Positions 1–27 (MTAMDRLDHVSNQLAAKRQKKNPEGKP) are disordered. Residues 34 to 39 (GSGNWG), phenylalanine 66, and phenylalanine 122 each bind NAD(+). Lysine 145 contacts substrate. Alanine 178 contributes to the NAD(+) binding site. The Proton acceptor role is filled by lysine 238. NAD(+) is bound by residues arginine 303 and glutamine 332. 303–304 (RN) provides a ligand contact to substrate.

It belongs to the NAD-dependent glycerol-3-phosphate dehydrogenase family.

It carries out the reaction sn-glycerol 3-phosphate + NAD(+) = dihydroxyacetone phosphate + NADH + H(+). This chain is Glycerol-3-phosphate dehydrogenase [NAD(+)] (GPD), found in Pichia angusta (Yeast).